We begin with the raw amino-acid sequence, 571 residues long: Cyclic di-GMP phosphodiesterase TpdA (571 aa).

3 helical membrane passes run 155–175, 321–341, and 395–415; these read IAWVLLVTTAIFFSVCYYAIN, VYYISGPLKSIILLSLFFLVI, and TLISNGLLLIHTILVIRAIYA. The EAL domain occupies 344–571; it reads HRSLQAFITY…HQGYFYPLHF (228 aa).

The protein localises to the cell inner membrane. The catalysed reaction is 3',3'-c-di-GMP + H2O = 5'-phosphoguanylyl(3'-&gt;5')guanosine + H(+). Cyclic di-GMP phosphodiesterase that plays an important role in modulating the global c-di-GMP pool. Its ability to alter the c-di-GMP pool has an effect on swimming motility, swarming motility and biofilm formation, multicellular behaviors that are important for the survival and dissemination of this environmental pathogen. Exhibits a dual function, namely, c-di-GMP degradation and modulation of its own expression. The sequence is that of Cyclic di-GMP phosphodiesterase TpdA from Vibrio parahaemolyticus serotype O3:K6 (strain RIMD 2210633).